We begin with the raw amino-acid sequence, 375 residues long: Alpha-2,8-sialyltransferase 8B (375 aa).

Topologically, residues 1-6 (MQLQFR) are cytoplasmic. A helical; Signal-anchor for type II membrane protein transmembrane segment spans residues 7–23 (SWMLAALTLLVVFLIFA). The Lumenal segment spans residues 24–375 (DISEIEEEIG…LTVGQCDGAT (352 aa)). N-linked (GlcNAc...) asparagine glycans are attached at residues N60, N72, N89, and N134. 2 cysteine pairs are disulfide-bonded: C157/C307 and C171/C371. CMP-N-acetyl-beta-neuraminate contacts are provided by N162 and N185. N-linked (GlcNAc...) asparagine glycans are attached at residues N219 and N234. CMP-N-acetyl-beta-neuraminate-binding residues include T294, T295, G296, W316, Y329, and H330. The active-site Proton donor/acceptor is the H346.

The protein belongs to the glycosyltransferase 29 family. Autopolysialylated. Autopolysialylation is not a prerequisite for the polysialylation acitity, but enhances the polysialylation acitity.

The protein localises to the golgi apparatus membrane. Its subcellular location is the secreted. It is found in the cell membrane. It carries out the reaction [N-acetyl-alpha-D-neuraminosyl-(2-&gt;8)](n) + CMP-N-acetyl-beta-neuraminate = [N-acetyl-alpha-D-neuraminosyl-(2-&gt;8)](n+1) + CMP + H(+). It participates in protein modification; protein glycosylation. In terms of biological role, catalyzes the transfer of a sialic acid from a CMP-linked sialic acid donor onto a terminal alpha-2,3-, alpha-2,6-, or alpha-2,8-linked sialic acid of an N-linked glycan acceptor through alpha-2,8-linkages. Therefore, participates in polysialic acid synthesis on various sialylated N-acetyllactosaminyl oligosaccharides (alpha-2,3-, alpha-2,6-, or alpha-2,8-linked sialic acid), including NCAM1, NCAM1 N-glycans, FETUB N-glycans, and to a lesser extent sialylparagloboside (SPG) and AHSG, which does not require the initial addition of an alpha 2,8-sialic acid. However, does not exhibit sialic acid-polymerase activity. Catalyzes polysialic acid synthesis in the hippocampal on NCAM1 and supports neurite outgrowth. ST8SIA2-mediated polysialylation influences on oligodendrocyte differentiation and may promote the integrity of myelin and axons. The polypeptide is Alpha-2,8-sialyltransferase 8B (Pan troglodytes (Chimpanzee)).